We begin with the raw amino-acid sequence, 320 residues long: Cytochrome f (320 aa).

Positions 1 to 35 (MENRKTFSWLKEQMIRSISVSIMIYVITRTSISNA) are cleaved as a signal peptide. Residues Tyr-36, Cys-56, Cys-59, and His-60 each contribute to the heme site. Residues 286 to 305 (VQGLLFFFASVILAQVFLVL) form a helical membrane-spanning segment.

This sequence belongs to the cytochrome f family. The 4 large subunits of the cytochrome b6-f complex are cytochrome b6, subunit IV (17 kDa polypeptide, petD), cytochrome f and the Rieske protein, while the 4 small subunits are PetG, PetL, PetM and PetN. The complex functions as a dimer. Heme is required as a cofactor.

It localises to the plastid. The protein resides in the chloroplast thylakoid membrane. Functionally, component of the cytochrome b6-f complex, which mediates electron transfer between photosystem II (PSII) and photosystem I (PSI), cyclic electron flow around PSI, and state transitions. The chain is Cytochrome f (petA) from Zea mays (Maize).